Here is a 456-residue protein sequence, read N- to C-terminus: MLPSQSPAIFTVSRLNQTVRLLLEHEMGQVWISGEISNFTQPASGHWYFTLKDDTAQVRCAMFRNSNRRVTFRPQHGQQVLVRANITLYEPRGDYQIIVESMQPAGEGLLQQKYEQLKAKLQAEGLFDLQYKKPLPSPAHCVGVITSKTGAALHDILHVLKRRDPSLPVIIYPTAVQGDDAPGQIVRAIELANQCNECDVLIVGRGGGSLEDLWSFNDERVARAIFASRIPVVSAVGHETDVTIADFVADLRAPTPSAAAEVVSRNQQELLRQVQSTRQRLEMAMDYYLANRTRRFTQIHHRLQQQHPQLRLARQQTMLERLQKRMSFALENQLKRAGQQQQRLTQRLNQQNPQPKIHRAQTRIQQLEYRLAETLRAQLSATRERFGNAVTHLEAVSPLSTLARGYSVTTATDGKVLKKVKQVKAGEMLTTRLEDGWVESEVKNIQPVKKSRKKVH.

It belongs to the XseA family. Heterooligomer composed of large and small subunits.

Its subcellular location is the cytoplasm. The catalysed reaction is Exonucleolytic cleavage in either 5'- to 3'- or 3'- to 5'-direction to yield nucleoside 5'-phosphates.. Bidirectionally degrades single-stranded DNA into large acid-insoluble oligonucleotides, which are then degraded further into small acid-soluble oligonucleotides. The chain is Exodeoxyribonuclease 7 large subunit from Escherichia coli O157:H7.